A 177-amino-acid chain; its full sequence is Nucleoside triphosphate/diphosphate phosphatase (177 aa).

The active-site Proton donor is R23. Residues N87, D103, D105, D107, D120, and E123 each coordinate Mg(2+).

It belongs to the Ntdp family. Mg(2+) is required as a cofactor.

The catalysed reaction is a ribonucleoside 5'-triphosphate + H2O = a ribonucleoside 5'-diphosphate + phosphate + H(+). The enzyme catalyses a ribonucleoside 5'-diphosphate + H2O = a ribonucleoside 5'-phosphate + phosphate + H(+). In terms of biological role, has nucleoside phosphatase activity towards nucleoside triphosphates and nucleoside diphosphates. This is Nucleoside triphosphate/diphosphate phosphatase from Streptococcus pneumoniae serotype 2 (strain D39 / NCTC 7466).